The primary structure comprises 117 residues: MSIIIDRINQEQMRQDHPDFRPGDTVAVHIRIIEGSKERVQLFQGVVIKRQKGTMDASYTVRKISHGVGVEKTFALHNPRIEKIEVITRGRVRRSRLYYLRDLRGKAARIRERSLRR.

It belongs to the bacterial ribosomal protein bL19 family.

This protein is located at the 30S-50S ribosomal subunit interface and may play a role in the structure and function of the aminoacyl-tRNA binding site. This chain is Large ribosomal subunit protein bL19, found in Desulfotalea psychrophila (strain LSv54 / DSM 12343).